Here is a 258-residue protein sequence, read N- to C-terminus: Hydroxyacylglutathione hydrolase (258 aa).

Zn(2+) is bound by residues His-55, His-57, Asp-59, His-60, His-115, Asp-132, and His-170.

Belongs to the metallo-beta-lactamase superfamily. Glyoxalase II family. In terms of assembly, monomer. It depends on Zn(2+) as a cofactor.

It carries out the reaction an S-(2-hydroxyacyl)glutathione + H2O = a 2-hydroxy carboxylate + glutathione + H(+). Its pathway is secondary metabolite metabolism; methylglyoxal degradation; (R)-lactate from methylglyoxal: step 2/2. Thiolesterase that catalyzes the hydrolysis of S-D-lactoyl-glutathione to form glutathione and D-lactic acid. The polypeptide is Hydroxyacylglutathione hydrolase (Shewanella denitrificans (strain OS217 / ATCC BAA-1090 / DSM 15013)).